Consider the following 431-residue polypeptide: 3-isopropylmalate dehydratase large subunit (431 aa).

Residues cysteine 308, cysteine 368, and cysteine 371 each contribute to the [4Fe-4S] cluster site.

This sequence belongs to the aconitase/IPM isomerase family. LeuC type 2 subfamily. In terms of assembly, heterodimer of LeuC and LeuD. [4Fe-4S] cluster serves as cofactor.

It catalyses the reaction (2R,3S)-3-isopropylmalate = (2S)-2-isopropylmalate. Its pathway is amino-acid biosynthesis; L-leucine biosynthesis; L-leucine from 3-methyl-2-oxobutanoate: step 2/4. Functionally, catalyzes the isomerization between 2-isopropylmalate and 3-isopropylmalate, via the formation of 2-isopropylmaleate. The sequence is that of 3-isopropylmalate dehydratase large subunit from Desulfosudis oleivorans (strain DSM 6200 / JCM 39069 / Hxd3) (Desulfococcus oleovorans).